The chain runs to 87 residues: Small ribosomal subunit protein bS20 (87 aa).

The protein belongs to the bacterial ribosomal protein bS20 family.

Functionally, binds directly to 16S ribosomal RNA. This is Small ribosomal subunit protein bS20 from Alkaliphilus metalliredigens (strain QYMF).